Reading from the N-terminus, the 85-residue chain is Insecticidal toxin Vn1 (85 aa).

Residues 1-23 form the signal peptide; the sequence is MFLYRLICLFILICIITVDISTS. A disulfide bond links cysteine 71 and cysteine 84.

As to expression, highly expressed in the venom apparatus, and weakly expressed in residual body.

It is found in the secreted. Its function is as follows. Endoparasitoid venom toxin that exhibits insecticidal activity against Tenebrio molitor pupae. Impacts genes related to immune response, environmental information processing, metabolism, and response to external stimuli in T.molitor, suggesting its involvement in the intricate parasitoid wasp-host interaction. The protein is Insecticidal toxin Vn1 of Aphidius gifuensis (Parasitoid wasp).